The primary structure comprises 515 residues: Vacuolar segregation protein PEP7 (515 aa).

A C2H2-type zinc finger spans residues 6–29 (VSCPICLRKFDNLQALNAHLDVEH). A disordered region spans residues 36–58 (DSLGSNDSRLVNGKQKKARSVDS). An FYVE-type 1; atypical zinc finger spans residues 72–137 (KKGKSCCHTC…CCHDCFVTKP (66 aa)). Positions 78, 81, 94, 97, 102, 105, 129, 132, 221, 224, 237, 240, 245, 252, 289, and 292 each coordinate Zn(2+). The FYVE-type 2 zinc-finger motif lies at 215–297 (DRSVLFCNIC…LCSHCIDMLF (83 aa)).

In terms of assembly, interacts with VPS21, VPS45, PEP3 and PEP5.

It is found in the vacuole membrane. Its function is as follows. Required for vacuole segregation and vacuole protein sorting. Possibly part of a complex which tethers the vacuole membrane to microtubules, either directly or via kinesin or dynein-like motor proteins. Probably functions in several interorganelle traffic pathways. This chain is Vacuolar segregation protein PEP7 (PEP7), found in Saccharomyces cerevisiae (strain ATCC 204508 / S288c) (Baker's yeast).